We begin with the raw amino-acid sequence, 152 residues long: Large-conductance mechanosensitive channel (152 aa).

Helical transmembrane passes span 14-34 (VIDL…VKSL) and 84-104 (VGQF…VFLL).

This sequence belongs to the MscL family. Homopentamer.

It is found in the cell inner membrane. Channel that opens in response to stretch forces in the membrane lipid bilayer. May participate in the regulation of osmotic pressure changes within the cell. In Laribacter hongkongensis (strain HLHK9), this protein is Large-conductance mechanosensitive channel.